The following is a 769-amino-acid chain: P-selectin (769 aa).

A signal peptide spans Met-1–Glu-32. The Extracellular segment spans residues Leu-33–Ala-717. 2 N-linked (GlcNAc...) asparagine glycosylation sites follow: Asn-54 and Asn-80. Residues Ala-58–Cys-158 form the C-type lectin domain. Intrachain disulfides connect Cys-60/Cys-158, Cys-131/Cys-150, Cys-163/Cys-174, Cys-168/Cys-183, Cys-185/Cys-194, Cys-200/Cys-244, Cys-230/Cys-257, Cys-262/Cys-306, Cys-292/Cys-319, Cys-324/Cys-368, Cys-354/Cys-381, Cys-386/Cys-430, Cys-416/Cys-443, Cys-448/Cys-492, Cys-478/Cys-505, Cys-510/Cys-554, Cys-540/Cys-567, Cys-581/Cys-625, Cys-611/Cys-638, Cys-643/Cys-687, and Cys-673/Cys-700. Residues Glu-121, Asn-123, and Asn-124 each contribute to the Ca(2+) site. Residue Asn-123 coordinates a carbohydrate. Positions 133 and 146 each coordinate a carbohydrate. Positions 146 and 147 each coordinate Ca(2+). Residues Tyr-159–Glu-195 enclose the EGF-like domain. A glycan (N-linked (GlcNAc...) asparagine) is linked at Asn-180. Sushi domains are found at residues Arg-198–Ala-259, Val-260–Ala-321, Ile-322–Ala-383, Leu-384–Ala-445, Val-446–Ala-507, Ser-508–Val-569, Leu-579–Ala-640, and Val-641–Ala-702. N-linked (GlcNAc...) asparagine glycans are attached at residues Asn-212 and Asn-219. Asn-347 carries an N-linked (GlcNAc...) asparagine glycan. Residue Asn-398 is glycosylated (N-linked (GlcNAc...) asparagine). Residue Asn-604 is glycosylated (N-linked (GlcNAc...) asparagine). Asn-655, Asn-662, and Asn-680 each carry an N-linked (GlcNAc...) asparagine glycan. The helical transmembrane segment at Ala-718–Leu-734 threads the bilayer. Topologically, residues Arg-735–Pro-769 are cytoplasmic. A disordered region spans residues Gln-740–Pro-769. An Endocytosis signal motif is present at residues Tyr-757–Phe-760. The interval Phe-760 to Pro-769 is interaction with SNX17.

This sequence belongs to the selectin/LECAM family. As to quaternary structure, interacts with SNX17. Interacts with SELPLG/PSGL1 and PODXL2 and mediates neutrophil adhesion and leukocyte rolling. This interaction requires the sialyl-Lewis X epitope of SELPLG and PODXL2, and specific tyrosine sulfation on SELPLG. Interacts (via C-type lectin domain) with alpha-IIb/beta3 integrin ITGA2B:ITGB3 and alpha-V/beta-3 integrin ITGAV:ITGB3. Interacts with alpha5/beta1 integrin ITGA5:ITGB1 and alpha4/beta1 integrin ITGA4:ITGB.

The protein localises to the cell membrane. Its function is as follows. Ca(2+)-dependent receptor for myeloid cells that binds to carbohydrates on neutrophils and monocytes. Mediates the interaction of activated endothelial cells or platelets with leukocytes. The ligand recognized is sialyl-Lewis X. Mediates rapid rolling of leukocyte rolling over vascular surfaces during the initial steps in inflammation through interaction with SELPLG. Mediates cell-cell interactions and cell adhesion via the interaction with integrin alpha-IIb/beta3 (ITGA2B:ITGB3) and integrin alpha-V/beta-3 (ITGAV:ITGB3). The protein is P-selectin (SELP) of Ovis aries (Sheep).